The chain runs to 81 residues: Photosystem I iron-sulfur center (81 aa).

2 consecutive 4Fe-4S ferredoxin-type domains span residues 2 to 31 (SHSV…MIPW) and 39 to 68 (IASA…VRVY). The [4Fe-4S] cluster site is built by C11, C14, C17, C21, C48, C51, C54, and C58.

As to quaternary structure, the eukaryotic PSI reaction center is composed of at least 11 subunits. Requires [4Fe-4S] cluster as cofactor.

The protein localises to the plastid thylakoid membrane. It catalyses the reaction reduced [plastocyanin] + hnu + oxidized [2Fe-2S]-[ferredoxin] = oxidized [plastocyanin] + reduced [2Fe-2S]-[ferredoxin]. In terms of biological role, apoprotein for the two 4Fe-4S centers FA and FB of photosystem I (PSI); essential for photochemical activity. FB is the terminal electron acceptor of PSI, donating electrons to ferredoxin. The C-terminus interacts with PsaA/B/D and helps assemble the protein into the PSI complex. Required for binding of PsaD and PsaE to PSI. PSI is a plastocyanin-ferredoxin oxidoreductase, converting photonic excitation into a charge separation, which transfers an electron from the donor P700 chlorophyll pair to the spectroscopically characterized acceptors A0, A1, FX, FA and FB in turn. The protein is Photosystem I iron-sulfur center of Cuscuta gronovii (Common dodder).